A 574-amino-acid polypeptide reads, in one-letter code: Developmental and secondary metabolism regulator veA (574 aa).

4 disordered regions span residues 1-22, 39-60, 255-500, and 513-540; these read MATRAPLAPPPNETEASVSRIT, ERARACGAGAKSSADRRPVDPP, RSSD…GAGK, and RSYEDSFGHDDRPLYNGMRPDTESYPRR. Residues 25 to 230 enclose the Velvet domain; the sequence is GKKLTYKLNV…AEQGCRVRIR (206 aa). Positions 39 to 44 match the Nuclear localization signal motif; sequence ERARAC. Composition is skewed to pro residues over residues 314-323 and 330-341; these read RPLPPAPGPA and PAPPAPPAPPSH. 4 stretches are compositionally biased toward polar residues: residues 343 to 353, 385 to 394, 406 to 415, and 448 to 458; these read PGYQSHLSFGS, HARNPSTSAE, RMSTERSSYP, and VAQSAAPRSQT. Residues 457-498 are PEST; the sequence is QTPSSSLVPSLPPLKALSGDYPNNLSQSSSSTSQSPSHDLGA. Composition is skewed to low complexity over residues 459–474 and 482–493; these read PSSSLVPSLPPLKALS and SQSSSSTSQSPS. Residues 513 to 525 show a composition bias toward basic and acidic residues; the sequence is RSYEDSFGHDDRP.

It belongs to the velvet family. VeA subfamily. As to quaternary structure, component of the heterotrimeric velvet complex composed of laeA, veA and velB; VeA acting as a bridging protein between laeA and velB.

The protein resides in the nucleus. It is found in the cytoplasm. Component of the velvet transcription factor complex that controls sexual/asexual developmental ratio in response to light, promoting sexual development in the darkness while stimulating asexual sporulation under illumination. The velvet complex hat acts as a global regulator for secondary metabolite gene expression. Controls the expression of the cyclopiazonic acid, aflatrem, and aflatoxin gene clusters. Controls the expression of the sclerotium-specific pigment asparasone A gene cluster. Controls the expression of the aflavarin gene cluster. also controls the production of hydrolases and other extracellular proteins during growth on natural starch-based substrates. Regulates genes involved in the High Osmolarity Glycerol (HOG) signaling pathway. Required for the conidial and sclerotial density-dependent production. The polypeptide is Developmental and secondary metabolism regulator veA (Aspergillus flavus (strain ATCC 200026 / FGSC A1120 / IAM 13836 / NRRL 3357 / JCM 12722 / SRRC 167)).